Here is a 176-residue protein sequence, read N- to C-terminus: Shikimate kinase (176 aa).

14–19 (GAGKSS) is an ATP binding site. Serine 18 is a Mg(2+) binding site. Residues aspartate 36, arginine 60, and glycine 82 each contribute to the substrate site. Residue arginine 120 participates in ATP binding. Residue arginine 138 participates in substrate binding.

Belongs to the shikimate kinase family. As to quaternary structure, monomer. Requires Mg(2+) as cofactor.

The protein resides in the cytoplasm. It catalyses the reaction shikimate + ATP = 3-phosphoshikimate + ADP + H(+). Its pathway is metabolic intermediate biosynthesis; chorismate biosynthesis; chorismate from D-erythrose 4-phosphate and phosphoenolpyruvate: step 5/7. In terms of biological role, catalyzes the specific phosphorylation of the 3-hydroxyl group of shikimic acid using ATP as a cosubstrate. The sequence is that of Shikimate kinase from Dehalococcoides mccartyi (strain ATCC BAA-2266 / KCTC 15142 / 195) (Dehalococcoides ethenogenes (strain 195)).